The primary structure comprises 527 residues: F-box-like/WD repeat-containing protein TBL1X (527 aa).

The residue at position 2 (Ser-2) is an N-acetylserine. A LisH domain is found at 4 to 36 (TSDEVNFLVYRYLQESGFSHSAFTFGIESHISQ). In terms of domain architecture, F-box-like spans 41–86 (GTLVPPAALISILQKGLQYVEAEISINEDGTVFDGRPIESLSLIDA). Residue Lys-102 is modified to N6-acetyllysine. Residues 127–164 (TTPAAAAQQNPPKNGEATVNGEENGAHAINNHSKPMEI) are disordered. WD repeat units lie at residues 180-219 (GHESEVFICAWNPVSDLLASGSGDSTARIWNLNENSNGGS), 236-275 (PSNKDVTSLDWNSDGTLLATGSYDGFARIWTEDGNLASTL), 277-316 (QHKGPIFALKWNKKGNYILSAGVDKTTIIWDAHTGEAKQQ), 319-359 (FHSA…KTFQ), 360-399 (GHTNEVNAIKWDPSGMLLASCSDDMTLKIWSMKQDACVHD), 402-450 (AHSK…CIHT), 453-492 (KHQEPVYSVAFSPDGKYLASGSFDKCVHIWNTQSGSLVHS), and 494-526 (RGTGGIFEVCWNARGDKVGASASDGSVCVLDLR). A Glycyl lysine isopeptide (Lys-Gly) (interchain with G-Cter in SUMO2) cross-link involves residue Lys-290.

It belongs to the WD repeat EBI family. As to quaternary structure, homotetramer; dimer of dimers. Component of the N-Cor repressor complex, at least composed of NCOR1, NCOR2, HDAC3, TBL1X, TBL1R, CORO2A and GPS2. Component of a E3 ubiquitin ligase complex containing UBE2D1, SIAH1, CACYBP/SIP, SKP1, APC and TBL1X. Interacts with GPS2 (when sumoylated); leading to protect GPS2 against degradation by the proteasome. Probably part of other corepressor complexes, that do not contain NCOR1 and NCOR2. Interacts with histones H2B, H3a and H4. Interacts with MECP2; recruits TBL1X to the heterochromatin foci. Interacts with USP44. In terms of tissue distribution, expressed in the cochlea.

Its subcellular location is the nucleus. Its function is as follows. F-box-like protein involved in the recruitment of the ubiquitin/19S proteasome complex to nuclear receptor-regulated transcription units. Plays an essential role in transcription activation mediated by nuclear receptors. Probably acts as integral component of corepressor complexes that mediates the recruitment of the 19S proteasome complex, leading to the subsequent proteasomal degradation of transcription repressor complexes, thereby allowing cofactor exchange. This is F-box-like/WD repeat-containing protein TBL1X (Tbl1x) from Mus musculus (Mouse).